We begin with the raw amino-acid sequence, 81 residues long: Large ribosomal subunit protein bL28 (81 aa).

Belongs to the bacterial ribosomal protein bL28 family. Part of the 50S ribosomal subunit.

This Deinococcus radiodurans (strain ATCC 13939 / DSM 20539 / JCM 16871 / CCUG 27074 / LMG 4051 / NBRC 15346 / NCIMB 9279 / VKM B-1422 / R1) protein is Large ribosomal subunit protein bL28.